The chain runs to 335 residues: MAPNVEDMESDLPESEEKLEKLVAPQAAPRKYQIIYTNLLTFGYWHIAGLYGLYLCFTSAKWQTIILALILNEMAILGITAGAHRLWAHRSYKATVPLQIILIIFNSLSFQNSAIHWIRDHRMHHKYSDTDGDPHNASRGFFYSHVGWLLVKKHPEVKKRAKTIDMSDIYSNPILRFQKKYAIPFIGMICFVLPTIIPMYFWGETLSNAWHITMLRYVFSLNSIFLVNSAAHLYGYRPYDKNILPAENKMTFIACLGENFHNYHHVFPWDYRASELGNIGMNWTAKFIDFFAWIGWAYDLKTASDENIKSRMKRTGDGTDVSGQKYSCESSEVLQ.

A run of 3 helical transmembrane segments spans residues 39 to 59 (LLTF…CFTS), 64 to 84 (TIIL…AGAH), and 98 to 118 (LQII…IHWI). Residues 84–89 (HRLWAH) carry the Histidine box-1 motif. The Histidine box-2 motif lies at 121-125 (HRMHH). 2 consecutive transmembrane segments (helical) span residues 182–202 (AIPF…MYFW) and 213–235 (TMLR…HLYG). The short motif at 261-265 (HNYHH) is the Histidine box-3 element. The segment at 312 to 335 (MKRTGDGTDVSGQKYSCESSEVLQ) is disordered. Polar residues predominate over residues 321–335 (VSGQKYSCESSEVLQ).

Belongs to the fatty acid desaturase type 1 family. Fe cation is required as a cofactor. Detected in pheromone gland.

The protein resides in the membrane. It catalyses the reaction an 11,12-saturated fatty acyl-CoA + 2 Fe(II)-[cytochrome b5] + O2 + 2 H(+) = an (11Z)-Delta(11)-fatty acyl-CoA + 2 Fe(III)-[cytochrome b5] + 2 H2O. Functionally, catalyzes the formation of Delta(11) fatty acyl precursors in the pheromone gland, with a preference for myristic acid. This is Acyl-CoA Delta(11) desaturase from Choristoneura rosaceana (Oblique banded leafroller).